The sequence spans 194 residues: Imidazoleglycerol-phosphate dehydratase (194 aa).

The protein belongs to the imidazoleglycerol-phosphate dehydratase family.

The protein resides in the cytoplasm. It catalyses the reaction D-erythro-1-(imidazol-4-yl)glycerol 3-phosphate = 3-(imidazol-4-yl)-2-oxopropyl phosphate + H2O. It participates in amino-acid biosynthesis; L-histidine biosynthesis; L-histidine from 5-phospho-alpha-D-ribose 1-diphosphate: step 6/9. This is Imidazoleglycerol-phosphate dehydratase from Streptococcus thermophilus (strain ATCC BAA-491 / LMD-9).